A 118-amino-acid polypeptide reads, in one-letter code: Ribonuclease P protein component (118 aa).

This sequence belongs to the RnpA family. In terms of assembly, consists of a catalytic RNA component (M1 or rnpB) and a protein subunit.

The enzyme catalyses Endonucleolytic cleavage of RNA, removing 5'-extranucleotides from tRNA precursor.. Its function is as follows. RNaseP catalyzes the removal of the 5'-leader sequence from pre-tRNA to produce the mature 5'-terminus. It can also cleave other RNA substrates such as 4.5S RNA. The protein component plays an auxiliary but essential role in vivo by binding to the 5'-leader sequence and broadening the substrate specificity of the ribozyme. The chain is Ribonuclease P protein component from Photobacterium profundum (strain SS9).